Here is a 501-residue protein sequence, read N- to C-terminus: Glycerol kinase (501 aa).

Thr-17 provides a ligand contact to ADP. The ATP site is built by Thr-17, Thr-18, and Ser-19. Thr-17 contacts sn-glycerol 3-phosphate. Arg-21 is an ADP binding site. Sn-glycerol 3-phosphate-binding residues include Arg-87, Glu-88, Tyr-139, and Asp-243. Glycerol-binding residues include Arg-87, Glu-88, Tyr-139, Asp-243, and Gln-244. The ADP site is built by Thr-265 and Gly-308. The ATP site is built by Thr-265, Gly-308, Gln-312, and Gly-409. ADP-binding residues include Gly-409 and Asn-413.

This sequence belongs to the FGGY kinase family.

It catalyses the reaction glycerol + ATP = sn-glycerol 3-phosphate + ADP + H(+). It participates in polyol metabolism; glycerol degradation via glycerol kinase pathway; sn-glycerol 3-phosphate from glycerol: step 1/1. Inhibited by fructose 1,6-bisphosphate (FBP). In terms of biological role, key enzyme in the regulation of glycerol uptake and metabolism. Catalyzes the phosphorylation of glycerol to yield sn-glycerol 3-phosphate. The chain is Glycerol kinase from Pseudomonas syringae pv. syringae (strain B728a).